A 300-amino-acid polypeptide reads, in one-letter code: Nucleotide-binding protein MCCL_0516 (300 aa).

15-22 serves as a coordination point for ATP; that stretch reads GMSGAGKS. 66 to 69 lines the GTP pocket; sequence DLRG.

Belongs to the RapZ-like family.

Displays ATPase and GTPase activities. The chain is Nucleotide-binding protein MCCL_0516 from Macrococcus caseolyticus (strain JCSC5402) (Macrococcoides caseolyticum).